The following is a 682-amino-acid chain: RNA helicase NPH-II (682 aa).

The 174-residue stretch at Phe-181–His-354 folds into the Helicase ATP-binding domain. Residue Gly-194–Thr-201 participates in ATP binding. The short motif at Asp-303–His-306 is the DEXH box element. Residues Asn-386–Leu-551 form the Helicase C-terminal domain.

It belongs to the DEAD box helicase family. DEAH subfamily. Monomer.

It is found in the virion. It catalyses the reaction ATP + H2O = ADP + phosphate + H(+). Its function is as follows. NTP-dependent helicase that catalyzes unidirectional unwinding of 3'tailed duplex RNAs and plays an important role during transcription of early mRNAs, presumably by preventing R-loop formation behind the elongating RNA polymerase. Might also play a role in the export of newly synthesized mRNA chains out of the core into the cytoplasm. Required for replication and propagation of viral particles. The sequence is that of RNA helicase NPH-II (NPH2) from Vertebrata (FPV).